We begin with the raw amino-acid sequence, 168 residues long: 2-C-methyl-D-erythritol 2,4-cyclodiphosphate synthase (168 aa).

Asp-11 and His-13 together coordinate a divalent metal cation. Residues 11 to 13 (DVH) and 38 to 39 (HS) each bind 4-CDP-2-C-methyl-D-erythritol 2-phosphate. Position 46 (His-46) interacts with a divalent metal cation. 4-CDP-2-C-methyl-D-erythritol 2-phosphate-binding positions include 60 to 62 (DIG), 133 to 136 (TTTD), Phe-140, and Arg-143.

Belongs to the IspF family. As to quaternary structure, homotrimer. It depends on a divalent metal cation as a cofactor.

It catalyses the reaction 4-CDP-2-C-methyl-D-erythritol 2-phosphate = 2-C-methyl-D-erythritol 2,4-cyclic diphosphate + CMP. It functions in the pathway isoprenoid biosynthesis; isopentenyl diphosphate biosynthesis via DXP pathway; isopentenyl diphosphate from 1-deoxy-D-xylulose 5-phosphate: step 4/6. Its function is as follows. Involved in the biosynthesis of isopentenyl diphosphate (IPP) and dimethylallyl diphosphate (DMAPP), two major building blocks of isoprenoid compounds. Catalyzes the conversion of 4-diphosphocytidyl-2-C-methyl-D-erythritol 2-phosphate (CDP-ME2P) to 2-C-methyl-D-erythritol 2,4-cyclodiphosphate (ME-CPP) with a corresponding release of cytidine 5-monophosphate (CMP). The chain is 2-C-methyl-D-erythritol 2,4-cyclodiphosphate synthase from Cutibacterium acnes (strain DSM 16379 / KPA171202) (Propionibacterium acnes).